We begin with the raw amino-acid sequence, 483 residues long: Transmembrane protein 39B (483 aa).

N9 carries an N-linked (GlcNAc...) asparagine glycan. 7 consecutive transmembrane segments (helical) span residues 76–96 (HLLFELQLFFCHLIALFVHYI), 114–134 (TSLNFHLIDFNVLTLTTIVLA), 158–182 (LLVATRFAVLTGTGWSLCRSIILLF), 187–207 (FFNLLFLCYPFGMYIPFLQLG), 281–301 (EVLLSSMLSAYYVAFVPVWFV), 414–434 (VLNILTTLEGVLIFYQLYSLL), and 440–460 (HHTISLALILFSNYYAFFKLL).

The protein belongs to the TMEM39 family.

The protein localises to the endoplasmic reticulum membrane. Functionally, may protect the cells against DNA damage caused by exposure to the cold-warming stress and facilitates tissue damage repair during the recovery phase. The polypeptide is Transmembrane protein 39B (Xenopus tropicalis (Western clawed frog)).